We begin with the raw amino-acid sequence, 528 residues long: Chaperonin GroEL, chloroplastic (528 aa).

Residues 29–32 (TLGP), 86–90 (DGTTT), G414, 480–482 (DAA), and D496 contribute to the ATP site.

The protein belongs to the chaperonin (HSP60) family. Forms a cylinder of 14 subunits composed of two heptameric rings stacked back-to-back. Interacts with the co-chaperonin GroES.

Its subcellular location is the plastid. The protein resides in the chloroplast. It carries out the reaction ATP + H2O + a folded polypeptide = ADP + phosphate + an unfolded polypeptide.. In terms of biological role, together with its co-chaperonin GroES, plays an essential role in assisting protein folding. The GroEL-GroES system forms a nano-cage that allows encapsulation of the non-native substrate proteins and provides a physical environment optimized to promote and accelerate protein folding. The polypeptide is Chaperonin GroEL, chloroplastic (Pyropia yezoensis (Susabi-nori)).